The following is a 184-amino-acid chain: UPF0301 protein ABSDF3201 (184 aa).

It belongs to the UPF0301 (AlgH) family.

The protein is UPF0301 protein ABSDF3201 of Acinetobacter baumannii (strain SDF).